The following is a 265-amino-acid chain: Triosephosphate isomerase (265 aa).

8–10 (NWK) is a substrate binding site. Histidine 103 serves as the catalytic Electrophile. The active-site Proton acceptor is the glutamate 182. Residues glycine 188, serine 226, and 247-248 (GG) each bind substrate.

This sequence belongs to the triosephosphate isomerase family. As to quaternary structure, homodimer.

It localises to the cytoplasm. The catalysed reaction is D-glyceraldehyde 3-phosphate = dihydroxyacetone phosphate. The protein operates within carbohydrate biosynthesis; gluconeogenesis. It participates in carbohydrate degradation; glycolysis; D-glyceraldehyde 3-phosphate from glycerone phosphate: step 1/1. Its function is as follows. Involved in the gluconeogenesis. Catalyzes stereospecifically the conversion of dihydroxyacetone phosphate (DHAP) to D-glyceraldehyde-3-phosphate (G3P). This is Triosephosphate isomerase from Psychrobacter sp. (strain PRwf-1).